The sequence spans 277 residues: Putative hydroxypyruvate isomerase (277 aa).

Catalysis depends on proton donor/acceptor residues glutamate 150 and glutamate 249.

Belongs to the hyi family.

The catalysed reaction is 3-hydroxypyruvate = 2-hydroxy-3-oxopropanoate. In terms of biological role, catalyzes the reversible isomerization between hydroxypyruvate and 2-hydroxy-3-oxopropanoate (also termed tartronate semialdehyde). The chain is Putative hydroxypyruvate isomerase (HYI) from Homo sapiens (Human).